The primary structure comprises 532 residues: D-arabinono-1,4-lactone oxidase (532 aa).

One can recognise an FAD-binding PCMH-type domain in the interval 25–199 (YSARPRLYFQ…VRATIRVVPA (175 aa)). Position 62 is a pros-8alpha-FAD histidine (His-62).

It belongs to the oxygen-dependent FAD-linked oxidoreductase family. FAD serves as cofactor.

The protein localises to the mitochondrion membrane. The catalysed reaction is D-arabinono-1,4-lactone + O2 = dehydro-D-arabinono-1,4-lactone + H2O2 + H(+). It functions in the pathway cofactor biosynthesis; D-erythroascorbate biosynthesis; dehydro-D-arabinono-1,4-lactone from D-arabinose: step 2/2. The protein is D-arabinono-1,4-lactone oxidase (ALO1) of Eremothecium gossypii (strain ATCC 10895 / CBS 109.51 / FGSC 9923 / NRRL Y-1056) (Yeast).